The following is a 460-amino-acid chain: Keratin, type I cytoskeletal 27 (460 aa).

A head region spans residues methionine 1–asparagine 83. The coil 1A stretch occupies residues glutamate 84–tryptophan 119. In terms of domain architecture, IF rod spans glutamate 84–cysteine 399. The tract at residues tyrosine 120–valine 141 is linker 1. Residues isoleucine 142–leucine 233 form a coil 1B region. The linker 12 stretch occupies residues glutamine 234–leucine 256. Positions leucine 257 to glutamate 395 are coil 2. The tract at residues aspartate 396–serine 460 is tail. Residues aspartate 429–serine 460 form a disordered region. The span at lysine 448 to serine 460 shows a compositional bias: polar residues.

Belongs to the intermediate filament family. In terms of assembly, heterotetramer of two type I and two type II keratins. Interacts with KRT6A to form filaments.

Its subcellular location is the cytoplasm. Its function is as follows. Essential for the proper assembly of type I and type II keratin protein complexes and formation of keratin intermediate filaments in the inner root sheath (irs). The polypeptide is Keratin, type I cytoskeletal 27 (Capra hircus (Goat)).